Reading from the N-terminus, the 155-residue chain is MSRRGTAEEKTAKSDPIYRNRLVNMLVNRILKHGKKSLAYQIIYQAVKKMQQKTETNPLSVLRQAIRGVTPDIAVKARRVGGSTHQVPIEIGSTQGKALAIRWLLGASRKRPGRNMAFKLSSELVDAAKGSGDAIRKKEETHRMAEANRAFAHFR.

The protein belongs to the universal ribosomal protein uS7 family. In terms of assembly, part of the 30S ribosomal subunit.

Its subcellular location is the plastid. The protein resides in the chloroplast. Functionally, one of the primary rRNA binding proteins, it binds directly to 16S rRNA where it nucleates assembly of the head domain of the 30S subunit. This is Small ribosomal subunit protein uS7c (rps7) from Allium textile (Textile onion).